The following is a 278-amino-acid chain: Biotin synthase (278 aa).

Residues 1–227 enclose the Radical SAM core domain; the sequence is MQIMLCAISN…QSVVMVAGGR (227 aa). [4Fe-4S] cluster-binding residues include C16, C20, and C23. 3 residues coordinate [2Fe-2S] cluster: C60, C95, and C153.

Belongs to the radical SAM superfamily. Biotin synthase family. In terms of assembly, homodimer. The cofactor is [4Fe-4S] cluster. [2Fe-2S] cluster serves as cofactor.

The catalysed reaction is (4R,5S)-dethiobiotin + (sulfur carrier)-SH + 2 reduced [2Fe-2S]-[ferredoxin] + 2 S-adenosyl-L-methionine = (sulfur carrier)-H + biotin + 2 5'-deoxyadenosine + 2 L-methionine + 2 oxidized [2Fe-2S]-[ferredoxin]. The protein operates within cofactor biosynthesis; biotin biosynthesis; biotin from 7,8-diaminononanoate: step 2/2. Functionally, catalyzes the conversion of dethiobiotin (DTB) to biotin by the insertion of a sulfur atom into dethiobiotin via a radical-based mechanism. The sequence is that of Biotin synthase from Campylobacter jejuni subsp. jejuni serotype O:6 (strain 81116 / NCTC 11828).